Reading from the N-terminus, the 355-residue chain is Cyclic nucleotide-gated potassium channel mll3241 (355 aa).

The Cytoplasmic segment spans residues 1–12; sequence MSVLPFLRIYAP. Residues 13-30 form a helical membrane-spanning segment; it reads LNAVLAAPGLLAVAALTI. Residues 31-38 lie on the Periplasmic side of the membrane; the sequence is PDMSGRSR. The helical transmembrane segment at 39–61 threads the bilayer; sequence LALAALLAVIWGAYLLQLAATLL. Topologically, residues 62-74 are cytoplasmic; that stretch reads KRRAGVVRDRTPK. The chain crosses the membrane as a helical span at residues 75–94; it reads IAIDVLAVLVPLAAFLLDGS. Residues 95-112 traverse the membrane as a helical segment; it reads PDWSLYCAVWLLKPLRDS. The Cytoplasmic segment spans residues 113-129; the sequence is TFFPVLGRVLANEARNL. The chain crosses the membrane as a helical span at residues 130 to 150; that stretch reads IGVTTLFGVVLFAVALAAYVI. The Periplasmic portion of the chain corresponds to 151 to 161; sequence ERDIQPEKFGS. The segment at residues 162–180 is an intramembrane region (pore-forming); sequence IPQAMWWAVVTLSTTGYGD. The Selectivity filter signature appears at 175 to 180; it reads TTGYGD. Over 181 to 185 the chain is Periplasmic; sequence TIPQS. Residues 186–210 form a helical membrane-spanning segment; that stretch reads FAGRVLAGAVMMSGIGIFGLWAGIL. The Cytoplasmic segment spans residues 211–355; it reads ATGFYQEVRR…LERRGAAASA (145 aa). 3',5'-cyclic AMP is bound by residues 297 to 298, 307 to 308, and arginine 348; these read GE and RS.

Belongs to the potassium channel family. In terms of assembly, homotetramer.

Its subcellular location is the cell membrane. In terms of biological role, cyclic nucleotide-regulated potassium channel activated by cAMP. This Mesorhizobium japonicum (strain LMG 29417 / CECT 9101 / MAFF 303099) (Mesorhizobium loti (strain MAFF 303099)) protein is Cyclic nucleotide-gated potassium channel mll3241.